A 1031-amino-acid polypeptide reads, in one-letter code: Error-prone DNA polymerase (1031 aa).

This sequence belongs to the DNA polymerase type-C family. DnaE2 subfamily.

The protein localises to the cytoplasm. The catalysed reaction is DNA(n) + a 2'-deoxyribonucleoside 5'-triphosphate = DNA(n+1) + diphosphate. Its function is as follows. DNA polymerase involved in damage-induced mutagenesis and translesion synthesis (TLS). It is not the major replicative DNA polymerase. The polypeptide is Error-prone DNA polymerase (Pseudomonas syringae pv. tomato (strain ATCC BAA-871 / DC3000)).